The following is a 1022-amino-acid chain: ATPase MORC2B (1022 aa).

Ala-2 is subject to N-acetylalanine. Residues Asn-39, 87-89 (SAK), and 99-105 (RYGNGLK) each bind ATP. Asn-39 provides a ligand contact to Mg(2+). A coiled-coil region spans residues 285-362 (KTRAEQEVKK…RDAKQQALKE (78 aa)). Lys-427 contacts ATP. The CW-type zinc finger occupies 490-544 (AMQVPTTIQCDLCLKWRTLPFQLSAVEEGYPINWVCSMNPDPEQDQCEAFELKQK). Zn(2+)-binding residues include Cys-499, Cys-502, Cys-525, and Cys-536. Positions 555-583 (KTQEERQKQLTEKIQQEQRKLKALKKIKP) form a coiled coil. Residue Ser-615 is modified to Phosphoserine. Residue Lys-649 forms a Glycyl lysine isopeptide (Lys-Gly) (interchain with G-Cter in SUMO2) linkage. 4 positions are modified to phosphoserine: Ser-690, Ser-724, Ser-733, and Ser-737. Lys-758 is covalently cross-linked (Glycyl lysine isopeptide (Lys-Gly) (interchain with G-Cter in SUMO2)). A phosphoserine mark is found at Ser-768 and Ser-770. Position 827 is a phosphothreonine (Thr-827). Ser-846 and Ser-851 each carry phosphoserine. Residue Lys-922 forms a Glycyl lysine isopeptide (Lys-Gly) (interchain with G-Cter in SUMO2) linkage. The stretch at 962–1001 (QAKVSEESLRISQKKLQETEEKLQKLRTNIQTLLQMAQQG) forms a coiled coil.

As to quaternary structure, interacts with Morc2a. As to expression, protein is abundant in testes but not detected in other adult tissues examined (at protein level). Detected in germ cells with a distinct developmental-specific expression pattern but not in somatic cells such as Sertoli cells.

Its subcellular location is the nucleus. It carries out the reaction ATP + H2O = ADP + phosphate + H(+). Required for chromosomal synapsis and meiotic recombination in males and females. In Mus musculus (Mouse), this protein is ATPase MORC2B.